The chain runs to 322 residues: Transmembrane and ubiquitin-like domain-containing protein 2 (322 aa).

A helical membrane pass occupies residues 38–58 (VVAGVVVLILALVLAWLSTYV). The segment at 88–168 (VAGQGTPEPT…VRSEDSTCLP (81 aa)) is disordered. The span at 115-130 (EGGGDPTGEPGAGGGV) shows a compositional bias: gly residues. Positions 174 to 247 (ISVRLKFFND…IHCHRSPPGS (74 aa)) constitute a Ubiquitin-like domain. Transmembrane regions (helical) follow at residues 267–287 (LGVSVGSLMVPVFVVLLGVVW) and 296–316 (FFTAPATVSLVGVTVFFSFLV).

The protein localises to the membrane. This is Transmembrane and ubiquitin-like domain-containing protein 2 (TMUB2) from Bos taurus (Bovine).